The chain runs to 455 residues: N(5)-hydroxyornithine:cis-anhydromevalonyl coenzyme A-N(5)-transacylase SIDF (455 aa).

Residues 453 to 455 carry the PTS1-type peroxisomal targeting signal motif; it reads PKL.

This sequence belongs to the lysine N-acyltransferase mbtK family.

It localises to the peroxisome. Its pathway is siderophore biosynthesis. Functionally, hydroxyornithine transacylase; part of the gene cluster that mediates the biosynthesis of at least 11 siderophores, including beauverichelin A, dimerumic acid (DA), Na-dimethyl coprogen (NADC), eleutherazine B, ferricrocin (FC), fusarinine A, fusarinine C (FsC), metachelin A, mevalonolactone, rhodotorulic acid (RA) and tenellin. This cocktail of siderophores for iron metabolism is essential for virulence, and more specifically for the fungal virulence in penetrating through the host cuticle. Siderophore synthesis is also involved in conidial germination under iron-deficient conditions. For biosynthesis of fusarinine C, the transacylase SIDF transfers anhydromevalonyl to N(5)-hydroxyornithine. The required anhydromevalonyl-CoA moiety is derived from mevalonate by CoA ligation and dehydration catalyzed by SIDI and sidH respectively. The sequence is that of N(5)-hydroxyornithine:cis-anhydromevalonyl coenzyme A-N(5)-transacylase SIDF from Beauveria bassiana (strain ARSEF 2860) (White muscardine disease fungus).